The chain runs to 176 residues: PPE family protein PPE57 (176 aa).

This sequence belongs to the mycobacterial PPE family. In terms of assembly, interacts with human TLR2.

It localises to the secreted. Its subcellular location is the cell wall. The protein resides in the cell surface. In terms of biological role, plays a key role in regulating innate and adaptive immune responses through human Toll-like receptor 2 (TLR2). Interacts with TLR2, leading to the subsequent activation of the mitogen-activated protein kinase (MAPK) and nuclear factor kappa B (NF-kappa-B) signaling pathways. Induces macrophage activation by augmenting the expression of several cell surface molecules (CD40, CD80, CD86 and MHC class II) and pro-inflammatory cytokines (TNF-alpha, IL-6 and IL-12p40) within macrophages. Also participates in adaptive immunity by directing Th1-polarised immune responses. Stimulates specific humoral and cellular immune responses in tuberculosis (TB) patients. Induces a strong IgG(1) antibody response and an increased Th1/Th2 type immune response in mice. The polypeptide is PPE family protein PPE57 (Mycobacterium tuberculosis (strain ATCC 25618 / H37Rv)).